The primary structure comprises 757 residues: MDVNPTLLFLKVPAQNAISTTFPYTGDPPYSHGTGTGYTMDTVNRTHQYSEKGKWTTNTETGAPQLNPIDGPLPEDNEPSGYAQTDCVLEAMAFLEESHPGIFENSCLETMEVIQQTRVDKLTQGRQTYDWTLNRNQPAATALANTIEVFRSNGLTANESGRLIDFLKDVIESMDKEEMEITTHFQRKRRVRDNMTKKMVTQRTIGKKKQRLNKRSYLIRALTLNTMTKDAERGKLKRRAIATPGMQIRGFVHFVETLARNICEKLEQSGLPVGGNEKKAKLANVVRKMMTNSQDTELSFTITGDNTKWNENQNPRVFLAMITYITRNQPEWFRNVLSIAPIMFSNKMARLGKGYMFESKSMKLRTQIPAEMLASIDLKYFNESTRKKIEKIRPLLIDGTVSLSPGMMMGMFNMLSTVLGVSILNLGQKKYTKTTYWWDGLQSSDDFALIVNAPNHEGIQAGVNRFYRTCKLVGINMSKKKSYINRTGTFEFTSFFYRYGFVANFSMELPSFGVSGINESADMSIGVTVIKNNMINNDLGPATAQMALQLFIKDYRYTYRCHRGDTQIQTRRSFELKKLWEQTRSKAGLLVSDGGSNLYNIRNLHIPEVCLKWELMDEDYQGRLCNPLNPFVSHKEIESVNNAVVMPAHGPAKSMEYDAVATTHSWTPKRNRSILNTSQRGILEDEQMYQKCCNLFEKFFPSSSYRRPVGISSMVEAMVSRARIDARIDFESGRIKKEEFAEIMKICSTIEELRRQK.

Residues 50–82 (SEKGKWTTNTETGAPQLNPIDGPLPEDNEPSGY) form a disordered region. Over residues 55–64 (WTTNTETGAP) the composition is skewed to polar residues. 2 short sequence motifs (nuclear localization signal) span residues 187–195 (RKRRVRDNM) and 203–216 (RTIG…NKRS). A promoter-binding site region spans residues 249–256 (RGFVHFVE). Positions 286–483 (VRKMMTNSQD…GINMSKKKSY (198 aa)) constitute a RdRp catalytic domain.

It belongs to the influenza viruses polymerase PB1 family. In terms of assembly, influenza RNA polymerase is composed of three subunits: PB1, PB2 and PA. Interacts (via N-terminus) with PA (via C-terminus). Interacts (via C-terminus) with PB2 (via N-terminus); this interaction is essential for transcription initiation. Phosphorylated by host PRKCA.

It is found in the host nucleus. Its subcellular location is the host cytoplasm. It catalyses the reaction RNA(n) + a ribonucleoside 5'-triphosphate = RNA(n+1) + diphosphate. In terms of biological role, RNA-dependent RNA polymerase which is responsible for replication and transcription of virus RNA segments. The transcription of viral mRNAs occurs by a unique mechanism called cap-snatching. 5' methylated caps of cellular mRNAs are cleaved after 10-13 nucleotides by PA. In turn, these short capped RNAs are used as primers by PB1 for transcription of viral mRNAs. During virus replication, PB1 initiates RNA synthesis and copy vRNA into complementary RNA (cRNA) which in turn serves as a template for the production of more vRNAs. This chain is RNA-directed RNA polymerase catalytic subunit, found in Influenza A virus (strain A/Korea/426/1968 H2N2).